The chain runs to 436 residues: Histidinol dehydrogenase (436 aa).

The substrate site is built by serine 242, glutamine 264, and histidine 267. Zn(2+)-binding residues include glutamine 264 and histidine 267. Active-site proton acceptor residues include glutamate 332 and histidine 333. Histidine 333, aspartate 366, glutamate 420, and histidine 425 together coordinate substrate. Aspartate 366 provides a ligand contact to Zn(2+). Histidine 425 contacts Zn(2+).

The protein belongs to the histidinol dehydrogenase family. Zn(2+) is required as a cofactor.

The catalysed reaction is L-histidinol + 2 NAD(+) + H2O = L-histidine + 2 NADH + 3 H(+). The protein operates within amino-acid biosynthesis; L-histidine biosynthesis; L-histidine from 5-phospho-alpha-D-ribose 1-diphosphate: step 9/9. Its function is as follows. Catalyzes the sequential NAD-dependent oxidations of L-histidinol to L-histidinaldehyde and then to L-histidine. The polypeptide is Histidinol dehydrogenase (Nitratidesulfovibrio vulgaris (strain ATCC 29579 / DSM 644 / CCUG 34227 / NCIMB 8303 / VKM B-1760 / Hildenborough) (Desulfovibrio vulgaris)).